Reading from the N-terminus, the 244-residue chain is Agamous-like MADS-box protein AGL13 (244 aa).

Residues 3–57 (RGKVEVKRIENKITRQVTFSKRKSGLLKKAYELSVLCDAEVSLIIFSTGGKLYEF) form the MADS-box domain. One can recognise a K-box domain in the interval 85–175 (TQGLRQEVTK…KLETEDHDFK (91 aa)).

It localises to the nucleus. In terms of biological role, probable transcription factor. This is Agamous-like MADS-box protein AGL13 (AGL13) from Arabidopsis thaliana (Mouse-ear cress).